The primary structure comprises 104 residues: ATP-dependent Clp protease adapter protein ClpS (104 aa).

This sequence belongs to the ClpS family. Binds to the N-terminal domain of the chaperone ClpA.

Involved in the modulation of the specificity of the ClpAP-mediated ATP-dependent protein degradation. This chain is ATP-dependent Clp protease adapter protein ClpS, found in Bordetella avium (strain 197N).